Consider the following 248-residue polypeptide: tRNA (guanine-N(1)-)-methyltransferase (248 aa).

Residues Gly-117 and 137–142 (IGDFVL) each bind S-adenosyl-L-methionine.

Belongs to the RNA methyltransferase TrmD family. In terms of assembly, homodimer.

It is found in the cytoplasm. The catalysed reaction is guanosine(37) in tRNA + S-adenosyl-L-methionine = N(1)-methylguanosine(37) in tRNA + S-adenosyl-L-homocysteine + H(+). Its function is as follows. Specifically methylates guanosine-37 in various tRNAs. The sequence is that of tRNA (guanine-N(1)-)-methyltransferase from Polynucleobacter necessarius subsp. necessarius (strain STIR1).